The following is a 270-amino-acid chain: 3-phenylpropionate-dihydrodiol/cinnamic acid-dihydrodiol dehydrogenase (270 aa).

10–34 (FITGGGSGLGLALVERFIEKGAQVA) serves as a coordination point for NAD(+). Residue Ser-143 participates in substrate binding. The active-site Proton acceptor is Tyr-156.

This sequence belongs to the short-chain dehydrogenases/reductases (SDR) family.

The enzyme catalyses 3-(cis-5,6-dihydroxycyclohexa-1,3-dien-1-yl)propanoate + NAD(+) = 3-(2,3-dihydroxyphenyl)propanoate + NADH + H(+). The catalysed reaction is (2E)-3-(cis-5,6-dihydroxycyclohexa-1,3-dien-1-yl)prop-2-enoate + NAD(+) = (2E)-3-(2,3-dihydroxyphenyl)prop-2-enoate + NADH + H(+). Its pathway is aromatic compound metabolism; 3-phenylpropanoate degradation. Converts 3-phenylpropionate-dihydrodiol (PP-dihydrodiol) and cinnamic acid-dihydrodiol (CI-dihydrodiol) into 3-(2,3-dihydroxylphenyl)propanoic acid (DHPP) and 2,3-dihydroxicinnamic acid (DHCI), respectively. The sequence is that of 3-phenylpropionate-dihydrodiol/cinnamic acid-dihydrodiol dehydrogenase (hcaB) from Escherichia coli.